Here is a 480-residue protein sequence, read N- to C-terminus: Cytochrome b-c1 complex subunit 1, mitochondrial (480 aa).

A mitochondrion-targeting transit peptide spans 1–34 (MAASAVCRAACSGTQALLRTCRSPALLRLPALRG). Residues K111 and K138 each carry the N6-acetyllysine modification. K163 carries the N6-acetyllysine; alternate modification. At K163 the chain carries N6-succinyllysine; alternate. Phosphoserine is present on S212. The residue at position 214 (T214) is a Phosphothreonine.

The protein belongs to the peptidase M16 family. UQCRC1/QCR1 subfamily. Component of the ubiquinol-cytochrome c oxidoreductase (cytochrome b-c1 complex, complex III, CIII), a multisubunit enzyme composed of 11 subunits. The complex is composed of 3 respiratory subunits cytochrome b, cytochrome c1 and Rieske protein UQCRFS1, 2 core protein subunits UQCRC1/QCR1 and UQCRC2/QCR2, and 6 low-molecular weight protein subunits UQCRH/QCR6, UQCRB/QCR7, UQCRQ/QCR8, UQCR10/QCR9, UQCR11/QCR10 and subunit 9, the cleavage product of Rieske protein UQCRFS1. The complex exists as an obligatory dimer and forms supercomplexes (SCs) in the inner mitochondrial membrane with NADH-ubiquinone oxidoreductase (complex I, CI) and cytochrome c oxidase (complex IV, CIV), resulting in different assemblies (supercomplex SCI(1)III(2)IV(1) and megacomplex MCI(2)III(2)IV(2)). Interacts with UQCC6. Interacts with STMP1.

It is found in the mitochondrion inner membrane. Component of the ubiquinol-cytochrome c oxidoreductase, a multisubunit transmembrane complex that is part of the mitochondrial electron transport chain which drives oxidative phosphorylation. The respiratory chain contains 3 multisubunit complexes succinate dehydrogenase (complex II, CII), ubiquinol-cytochrome c oxidoreductase (cytochrome b-c1 complex, complex III, CIII) and cytochrome c oxidase (complex IV, CIV), that cooperate to transfer electrons derived from NADH and succinate to molecular oxygen, creating an electrochemical gradient over the inner membrane that drives transmembrane transport and the ATP synthase. The cytochrome b-c1 complex catalyzes electron transfer from ubiquinol to cytochrome c, linking this redox reaction to translocation of protons across the mitochondrial inner membrane, with protons being carried across the membrane as hydrogens on the quinol. In the process called Q cycle, 2 protons are consumed from the matrix, 4 protons are released into the intermembrane space and 2 electrons are passed to cytochrome c. The 2 core subunits UQCRC1/QCR1 and UQCRC2/QCR2 are homologous to the 2 mitochondrial-processing peptidase (MPP) subunits beta-MPP and alpha-MPP respectively, and they seem to have preserved their MPP processing properties. May be involved in the in situ processing of UQCRFS1 into the mature Rieske protein and its mitochondrial targeting sequence (MTS)/subunit 9 when incorporated into complex III. Seems to play an important role in the maintenance of proper mitochondrial function in nigral dopaminergic neurons. The chain is Cytochrome b-c1 complex subunit 1, mitochondrial (Uqcrc1) from Rattus norvegicus (Rat).